The primary structure comprises 872 residues: C-mannosyltransferase dpy-19 homolog (872 aa).

The next 9 membrane-spanning stretches (helical) occupy residues 4 to 24, 126 to 146, 149 to 169, 179 to 199, 211 to 231, 257 to 277, 279 to 299, 326 to 346, and 399 to 419; these read PNLYVILSHALIGCGFFFLYV, FVWLMGGVTLLVLYLYGTLLS, IFGGIYGVISYLMFHSFVAKI, FAFPFIFLQMFYLCICIGRII, IFAMSLFTACALLSWQFSTFI, VLDYSLSHLLGHALAFVMSHG, SQLLLTWQLSISLFLFLITMV, FLMLTLLLASSVQTTLIELFN, and VKTMIVKPYCMYGVVMLAMFF. Residues 508–535 are a coiled coil; the sequence is KRLRAQINRNSVKQRKERAQETKEAATD. The tract at residues 514 to 620 is disordered; sequence INRNSVKQRK…RSSSRRSSVV (107 aa). The span at 524 to 533 shows a compositional bias: basic and acidic residues; sequence ERAQETKEAA. The span at 541-551 shows a compositional bias: acidic residues; that stretch reads TEEEDKDPEAE. Helical transmembrane passes span 627–647 and 678–698; these read ILNMHYVYSFLQMLVFTLIGL and NIFWSVSLAVFLLSMFDPGMV.

Belongs to the dpy-19 family.

It localises to the membrane. Its function is as follows. Probable C-mannosyltransferase that mediates C-mannosylation of tryptophan residues on target proteins. The protein is C-mannosyltransferase dpy-19 homolog of Drosophila melanogaster (Fruit fly).